Consider the following 306-residue polypeptide: Lipoyl synthase (306 aa).

C55, C60, C66, C81, C85, C88, and S294 together coordinate [4Fe-4S] cluster. In terms of domain architecture, Radical SAM core spans 67 to 283 (WNHRTATFLL…RSYALARGFT (217 aa)).

The protein belongs to the radical SAM superfamily. Lipoyl synthase family. [4Fe-4S] cluster is required as a cofactor.

The protein resides in the cytoplasm. The catalysed reaction is [[Fe-S] cluster scaffold protein carrying a second [4Fe-4S](2+) cluster] + N(6)-octanoyl-L-lysyl-[protein] + 2 oxidized [2Fe-2S]-[ferredoxin] + 2 S-adenosyl-L-methionine + 4 H(+) = [[Fe-S] cluster scaffold protein] + N(6)-[(R)-dihydrolipoyl]-L-lysyl-[protein] + 4 Fe(3+) + 2 hydrogen sulfide + 2 5'-deoxyadenosine + 2 L-methionine + 2 reduced [2Fe-2S]-[ferredoxin]. It functions in the pathway protein modification; protein lipoylation via endogenous pathway; protein N(6)-(lipoyl)lysine from octanoyl-[acyl-carrier-protein]: step 2/2. Catalyzes the radical-mediated insertion of two sulfur atoms into the C-6 and C-8 positions of the octanoyl moiety bound to the lipoyl domains of lipoate-dependent enzymes, thereby converting the octanoylated domains into lipoylated derivatives. This Chloroflexus aurantiacus (strain ATCC 29364 / DSM 637 / Y-400-fl) protein is Lipoyl synthase.